A 203-amino-acid chain; its full sequence is GTP cyclohydrolase 1 (203 aa).

3 residues coordinate Zn(2+): Cys87, His90, and Cys158.

It belongs to the GTP cyclohydrolase I family. Homomer.

The enzyme catalyses GTP + H2O = 7,8-dihydroneopterin 3'-triphosphate + formate + H(+). The protein operates within cofactor biosynthesis; 7,8-dihydroneopterin triphosphate biosynthesis; 7,8-dihydroneopterin triphosphate from GTP: step 1/1. The chain is GTP cyclohydrolase 1 from Xylella fastidiosa (strain M23).